Here is a 90-residue protein sequence, read N- to C-terminus: Large ribosomal subunit protein eL37 (90 aa).

Positions 19, 22, 34, and 37 each coordinate Zn(2+). The segment at 19-37 (CRRCGRQSYHKQKNSCSSC) adopts a C4-type zinc-finger fold. A compositionally biased stretch (basic residues) spans 21–31 (RCGRQSYHKQK). A disordered region spans residues 21–59 (RCGRQSYHKQKNSCSSCGYPNPKMRNPGSIKARRRRTIG).

It belongs to the eukaryotic ribosomal protein eL37 family. Requires Zn(2+) as cofactor.

Its function is as follows. Binds to the 23S rRNA. The protein is Large ribosomal subunit protein eL37 (RPL37) of Encephalitozoon cuniculi (strain GB-M1) (Microsporidian parasite).